We begin with the raw amino-acid sequence, 157 residues long: Cytochrome c-type biogenesis protein CcmE (157 aa).

Residues 1 to 8 (MHPVRKQR) lie on the Cytoplasmic side of the membrane. The helical; Signal-anchor for type II membrane protein transmembrane segment at 9-29 (LMTVLFIVIASSVAVGLMVFA) threads the bilayer. Over 30-157 (LSKNLNLFYP…KTCEGLDYAS (128 aa)) the chain is Periplasmic. Heme contacts are provided by His124 and Tyr128.

It belongs to the CcmE/CycJ family.

The protein localises to the cell inner membrane. Heme chaperone required for the biogenesis of c-type cytochromes. Transiently binds heme delivered by CcmC and transfers the heme to apo-cytochromes in a process facilitated by CcmF and CcmH. This chain is Cytochrome c-type biogenesis protein CcmE, found in Saccharophagus degradans (strain 2-40 / ATCC 43961 / DSM 17024).